Here is a 1660-residue protein sequence, read N- to C-terminus: Cortactin-binding protein 2 (1660 aa).

Disordered regions lie at residues 1 to 26 (MATD…TAEA), 203 to 222 (KKKT…RSTE), 366 to 440 (IGVS…LHPG), and 454 to 478 (GNAN…SPTS). Residues 119–276 (RKMQERMSAQ…EQLKRGSDSK (158 aa)) are a coiled coil. Residues 386–396 (PSTGSTPDPTS) are compositionally biased toward low complexity. Residues 411-422 (QTPGITPQNSQA) show a composition bias toward polar residues. Arginine 498 bears the Asymmetric dimethylarginine mark. Residues 499-596 (FTGPQAGAPP…PPSSLPQGNR (98 aa)) form a disordered region. Residues 583-593 (TVASPPSSLPQ) are compositionally biased toward polar residues. ANK repeat units lie at residues 709–739 (GRPT…DINY), 743–772 (DGHS…QVNA), 776–805 (NGFT…HINH), 809–838 (GGQT…DRSV), and 842–871 (DGWT…PAHG). The disordered stretch occupies residues 872–897 (NSFSEEESESGVFDLDGEEESPEGKS). Residues 875–892 (SEEESESGVFDLDGEEES) are compositionally biased toward acidic residues. One copy of the ANK 6 repeat lies at 912-942 (EGWTAAHIAASKGFKNCLEILCRHGGLETER). The segment at 1445–1477 (CSKKKGESGSWRKVNTSPRRKSGRFSLPTWNKP) is disordered. A Phosphoserine modification is found at serine 1524. Residues 1617–1660 (RSKVTQCSQNTKSSSSNTRQIEINNSKEENWNFHKNEHLEKPNK) form a disordered region. Positions 1619–1640 (KVTQCSQNTKSSSSNTRQIEIN) are enriched in polar residues. Over residues 1641-1660 (NSKEENWNFHKNEHLEKPNK) the composition is skewed to basic and acidic residues.

As to quaternary structure, interacts with CTTN/cortactin SH3 domain. Interacts with STRN, STRN4/zinedin and MOB4/phocein; this interactions mediate the association with the STRIPAK core complex and may regulate dendritic spine distribution of the STRIPAK complex in hippocampal neurons. Activation of glutamate receptors weakens the interaction with STRN and STRN4.

Its subcellular location is the cytoplasm. It localises to the cell cortex. It is found in the cell projection. The protein localises to the dendritic spine. Its function is as follows. Regulates the dendritic spine distribution of CTTN/cortactin in hippocampal neurons, and thus controls dendritic spinogenesis and dendritic spine maintenance. Associates with the striatin-interacting phosphatase and kinase (STRIPAK) core complex to regulate dendritic spine distribution of the STRIPAK complex in hippocampal neurons. This is Cortactin-binding protein 2 (CTTNBP2) from Ateles geoffroyi (Black-handed spider monkey).